We begin with the raw amino-acid sequence, 87 residues long: Small ribosomal subunit protein bS20 (87 aa).

The tract at residues 1-20 (MANIKSQIKRNKTNEKARLR) is disordered.

It belongs to the bacterial ribosomal protein bS20 family.

In terms of biological role, binds directly to 16S ribosomal RNA. The sequence is that of Small ribosomal subunit protein bS20 from Corynebacterium efficiens (strain DSM 44549 / YS-314 / AJ 12310 / JCM 11189 / NBRC 100395).